A 233-amino-acid polypeptide reads, in one-letter code: Ubiquitin carboxyl-terminal hydrolase isozyme L4 (233 aa).

Residues 5 to 232 (RWLPLEANPE…LRFNAIALSA (228 aa)) enclose the UCH catalytic domain. The interaction with ubiquitin stretch occupies residues 8 to 13 (PLEANP). Cys95 acts as the Nucleophile in catalysis. Ser133 carries the phosphoserine modification. The Proton donor role is filled by His172. The segment at 222 to 227 (ELRFNA) is interaction with ubiquitin.

This sequence belongs to the peptidase C12 family. As to expression, expressed in various tissues at low level.

It is found in the cytoplasm. It carries out the reaction Thiol-dependent hydrolysis of ester, thioester, amide, peptide and isopeptide bonds formed by the C-terminal Gly of ubiquitin (a 76-residue protein attached to proteins as an intracellular targeting signal).. Functionally, ubiquitin-protein hydrolase is involved both in the processing of ubiquitin precursors and of ubiquitinated proteins. This enzyme is a thiol protease that recognizes and hydrolyzes a peptide bond at the C-terminal glycine of ubiquitin. This chain is Ubiquitin carboxyl-terminal hydrolase isozyme L4 (Uchl4), found in Mus musculus (Mouse).